A 176-amino-acid polypeptide reads, in one-letter code: Transcriptional repressor NrdR (176 aa).

A zinc finger lies at 3–34 (CPYCGSLETQVKDSRPTDDASAIRRRRVCPDC). In terms of domain architecture, ATP-cone spans 49-139 (LTVLKKSGRR…VYRNFREARD (91 aa)). Residues 147-176 (LDGAAQPEAPSKDDGGTDEPPAKTRAPTRA) form a disordered region.

Belongs to the NrdR family. The cofactor is Zn(2+).

Its function is as follows. Negatively regulates transcription of bacterial ribonucleotide reductase nrd genes and operons by binding to NrdR-boxes. This chain is Transcriptional repressor NrdR, found in Methylocella silvestris (strain DSM 15510 / CIP 108128 / LMG 27833 / NCIMB 13906 / BL2).